The primary structure comprises 124 residues: Ribonuclease VapC32 (124 aa).

A PINc domain is found at 2-112; sequence ILVDTSVWIE…TRDKRLKAAC (111 aa). Mg(2+) is bound by residues aspartate 5 and aspartate 86.

The protein belongs to the PINc/VapC protein family. Mg(2+) serves as cofactor.

Functionally, toxic component of a type II toxin-antitoxin (TA) system. An RNase. Its toxic effect is neutralized by coexpression with cognate antitoxin VapB32. In Mycobacterium tuberculosis (strain CDC 1551 / Oshkosh), this protein is Ribonuclease VapC32.